We begin with the raw amino-acid sequence, 252 residues long: Imidazole glycerol phosphate synthase subunit HisF (252 aa).

Catalysis depends on residues D11 and D130.

This sequence belongs to the HisA/HisF family. Heterodimer of HisH and HisF.

It localises to the cytoplasm. The catalysed reaction is 5-[(5-phospho-1-deoxy-D-ribulos-1-ylimino)methylamino]-1-(5-phospho-beta-D-ribosyl)imidazole-4-carboxamide + L-glutamine = D-erythro-1-(imidazol-4-yl)glycerol 3-phosphate + 5-amino-1-(5-phospho-beta-D-ribosyl)imidazole-4-carboxamide + L-glutamate + H(+). It functions in the pathway amino-acid biosynthesis; L-histidine biosynthesis; L-histidine from 5-phospho-alpha-D-ribose 1-diphosphate: step 5/9. In terms of biological role, IGPS catalyzes the conversion of PRFAR and glutamine to IGP, AICAR and glutamate. The HisF subunit catalyzes the cyclization activity that produces IGP and AICAR from PRFAR using the ammonia provided by the HisH subunit. This Thermococcus gammatolerans (strain DSM 15229 / JCM 11827 / EJ3) protein is Imidazole glycerol phosphate synthase subunit HisF.